The chain runs to 318 residues: Zinc chaperone YjiA (318 aa).

11-19 (GFLGAGKTT) serves as a coordination point for GTP. 5 residues coordinate Zn(2+): Glu-37, Glu-42, Cys-66, Glu-74, and His-114. The short motif at 64–67 (CICC) is the CXCC motif element. Position 161 (Asp-161) interacts with GTP. Zn(2+)-binding residues include Glu-167, His-170, and His-187. The CobW C-terminal domain occupies 224 to 315 (ISSIVVELDY…EEEIRAAFAG (92 aa)).

This sequence belongs to the SIMIBI class G3E GTPase family. ZNG1 subfamily. Monomer in the apo form. Metal binding induces oligomerization. Forms homodimers and higher oligomers.

It catalyses the reaction GTP + H2O = GDP + phosphate + H(+). With respect to regulation, GTPase activity is inhibited by metal binding. Activity is decreased in the presence of Co(II) or Ni(II), and is completely inhibited in the presence of Zn(II). In terms of biological role, zinc chaperone that directly transfers zinc cofactor to target proteins, thereby activating them. Zinc is transferred from the CXCC motif in the GTPase domain to the zinc binding site in target proteins in a process requiring GTP hydrolysis. The sequence is that of Zinc chaperone YjiA (yjiA) from Escherichia coli (strain K12).